The sequence spans 284 residues: Bifunctional protein FolD (284 aa).

NADP(+) is bound by residues 165-167 (GRS), Ser190, and Val231.

Belongs to the tetrahydrofolate dehydrogenase/cyclohydrolase family. Homodimer.

The enzyme catalyses (6R)-5,10-methylene-5,6,7,8-tetrahydrofolate + NADP(+) = (6R)-5,10-methenyltetrahydrofolate + NADPH. It carries out the reaction (6R)-5,10-methenyltetrahydrofolate + H2O = (6R)-10-formyltetrahydrofolate + H(+). Its pathway is one-carbon metabolism; tetrahydrofolate interconversion. Its function is as follows. Catalyzes the oxidation of 5,10-methylenetetrahydrofolate to 5,10-methenyltetrahydrofolate and then the hydrolysis of 5,10-methenyltetrahydrofolate to 10-formyltetrahydrofolate. The polypeptide is Bifunctional protein FolD (Bacillus licheniformis (strain ATCC 14580 / DSM 13 / JCM 2505 / CCUG 7422 / NBRC 12200 / NCIMB 9375 / NCTC 10341 / NRRL NRS-1264 / Gibson 46)).